A 148-amino-acid polypeptide reads, in one-letter code: Transcription antitermination protein NusB (148 aa).

It belongs to the NusB family.

In terms of biological role, involved in transcription antitermination. Required for transcription of ribosomal RNA (rRNA) genes. Binds specifically to the boxA antiterminator sequence of the ribosomal RNA (rrn) operons. The polypeptide is Transcription antitermination protein NusB (Nitrosococcus oceani (strain ATCC 19707 / BCRC 17464 / JCM 30415 / NCIMB 11848 / C-107)).